Reading from the N-terminus, the 316-residue chain is MSNKLEQLRKLTTVVADTGEIDAIKKYQPEDATTNPSLILKAAQIAEYAPLIDASIEYAKAQSNDKAQQVQDTCDMLAVNIGKEILKTIPGRISTEVDARLSYDMEGSVAKARQLVKMYNDAGITNDRILIKLASTWEGIRAAEILEKEGINCNLTLLFSFAQARACAEAGVFLISPFVGRIMDWYKAKEGRDFEASEDPGVLSVTKIYNYYKEYGYKTVVMGASFRNIGEILELAGCDRLTIAPALLAELEAAEGEVVEKLVDSKGAAERPAPMTHAEFLWEHNQDPMAVEKLAEGIRNFAVDQGKLEAMIEAKL.

Lysine 132 acts as the Schiff-base intermediate with substrate in catalysis.

The protein belongs to the transaldolase family. Type 1 subfamily. In terms of assembly, homodimer.

It is found in the cytoplasm. It carries out the reaction D-sedoheptulose 7-phosphate + D-glyceraldehyde 3-phosphate = D-erythrose 4-phosphate + beta-D-fructose 6-phosphate. The protein operates within carbohydrate degradation; pentose phosphate pathway; D-glyceraldehyde 3-phosphate and beta-D-fructose 6-phosphate from D-ribose 5-phosphate and D-xylulose 5-phosphate (non-oxidative stage): step 2/3. Its function is as follows. Transaldolase is important for the balance of metabolites in the pentose-phosphate pathway. The sequence is that of Transaldolase from Vibrio parahaemolyticus serotype O3:K6 (strain RIMD 2210633).